A 233-amino-acid chain; its full sequence is Nucleoside diphosphate kinase 2, chloroplastic (233 aa).

A chloroplast-targeting transit peptide spans Met-1–Lys-67. 6 residues coordinate ATP: Lys-93, Phe-141, Arg-169, Thr-175, Arg-186, and Asn-196. The active-site Pros-phosphohistidine intermediate is His-199.

This sequence belongs to the NDK family. It depends on Mg(2+) as a cofactor.

It is found in the plastid. The protein resides in the chloroplast. The enzyme catalyses a 2'-deoxyribonucleoside 5'-diphosphate + ATP = a 2'-deoxyribonucleoside 5'-triphosphate + ADP. The catalysed reaction is a ribonucleoside 5'-diphosphate + ATP = a ribonucleoside 5'-triphosphate + ADP. In terms of biological role, major role in the synthesis of nucleoside triphosphates other than ATP. The ATP gamma phosphate is transferred to the NDP beta phosphate via a ping-pong mechanism, using a phosphorylated active-site intermediate. The sequence is that of Nucleoside diphosphate kinase 2, chloroplastic (NDPK2) from Spinacia oleracea (Spinach).